Here is a 39-residue protein sequence, read N- to C-terminus: Conotoxin Cl14.7 (39 aa).

Residues 1–15 constitute a propeptide that is removed on maturation; that stretch reads MGDLSEADSMKHQLQ.

Contains 2 disulfide bonds. As to expression, expressed by the venom duct.

The protein localises to the secreted. This chain is Conotoxin Cl14.7, found in Californiconus californicus (California cone).